Here is a 283-residue protein sequence, read N- to C-terminus: Phosphatidylserine decarboxylase proenzyme (283 aa).

Active-site charge relay system; for autoendoproteolytic cleavage activity residues include aspartate 90, histidine 143, and serine 248. The active-site Schiff-base intermediate with substrate; via pyruvic acid; for decarboxylase activity is serine 248. The residue at position 248 (serine 248) is a Pyruvic acid (Ser); by autocatalysis.

It belongs to the phosphatidylserine decarboxylase family. PSD-B subfamily. Prokaryotic type I sub-subfamily. As to quaternary structure, heterodimer of a large membrane-associated beta subunit and a small pyruvoyl-containing alpha subunit. Requires pyruvate as cofactor. Is synthesized initially as an inactive proenzyme. Formation of the active enzyme involves a self-maturation process in which the active site pyruvoyl group is generated from an internal serine residue via an autocatalytic post-translational modification. Two non-identical subunits are generated from the proenzyme in this reaction, and the pyruvate is formed at the N-terminus of the alpha chain, which is derived from the carboxyl end of the proenzyme. The autoendoproteolytic cleavage occurs by a canonical serine protease mechanism, in which the side chain hydroxyl group of the serine supplies its oxygen atom to form the C-terminus of the beta chain, while the remainder of the serine residue undergoes an oxidative deamination to produce ammonia and the pyruvoyl prosthetic group on the alpha chain. During this reaction, the Ser that is part of the protease active site of the proenzyme becomes the pyruvoyl prosthetic group, which constitutes an essential element of the active site of the mature decarboxylase.

Its subcellular location is the cell membrane. The enzyme catalyses a 1,2-diacyl-sn-glycero-3-phospho-L-serine + H(+) = a 1,2-diacyl-sn-glycero-3-phosphoethanolamine + CO2. Its pathway is phospholipid metabolism; phosphatidylethanolamine biosynthesis; phosphatidylethanolamine from CDP-diacylglycerol: step 2/2. Catalyzes the formation of phosphatidylethanolamine (PtdEtn) from phosphatidylserine (PtdSer). The chain is Phosphatidylserine decarboxylase proenzyme from Francisella tularensis subsp. novicida (strain U112).